The chain runs to 125 residues: Small ribosomal subunit protein uS13 (125 aa).

The interval 92–125 is disordered; sequence RRSLPVRGQRTRTNARTRKGKRKTVAGKKKAVKK.

It belongs to the universal ribosomal protein uS13 family. In terms of assembly, part of the 30S ribosomal subunit. Forms a loose heterodimer with protein S19. Forms two bridges to the 50S subunit in the 70S ribosome.

Located at the top of the head of the 30S subunit, it contacts several helices of the 16S rRNA. In the 70S ribosome it contacts the 23S rRNA (bridge B1a) and protein L5 of the 50S subunit (bridge B1b), connecting the 2 subunits; these bridges are implicated in subunit movement. Contacts the tRNAs in the A and P-sites. The protein is Small ribosomal subunit protein uS13 of Pelodictyon phaeoclathratiforme (strain DSM 5477 / BU-1).